Consider the following 252-residue polypeptide: Imidazole glycerol phosphate synthase subunit HisF (252 aa).

Catalysis depends on residues aspartate 11 and aspartate 130.

Belongs to the HisA/HisF family. Heterodimer of HisH and HisF.

It localises to the cytoplasm. The enzyme catalyses 5-[(5-phospho-1-deoxy-D-ribulos-1-ylimino)methylamino]-1-(5-phospho-beta-D-ribosyl)imidazole-4-carboxamide + L-glutamine = D-erythro-1-(imidazol-4-yl)glycerol 3-phosphate + 5-amino-1-(5-phospho-beta-D-ribosyl)imidazole-4-carboxamide + L-glutamate + H(+). Its pathway is amino-acid biosynthesis; L-histidine biosynthesis; L-histidine from 5-phospho-alpha-D-ribose 1-diphosphate: step 5/9. Its function is as follows. IGPS catalyzes the conversion of PRFAR and glutamine to IGP, AICAR and glutamate. The HisF subunit catalyzes the cyclization activity that produces IGP and AICAR from PRFAR using the ammonia provided by the HisH subunit. This is Imidazole glycerol phosphate synthase subunit HisF from Streptococcus sanguinis (strain SK36).